A 459-amino-acid chain; its full sequence is Bifunctional protein GlmU (459 aa).

The tract at residues 1 to 230 is pyrophosphorylase; that stretch reads MSNRFAVILA…FDETLGVNDR (230 aa). UDP-N-acetyl-alpha-D-glucosamine-binding positions include 9-12, K23, Q73, and 78-79; these read LAAG and GT. D103 contributes to the Mg(2+) binding site. UDP-N-acetyl-alpha-D-glucosamine-binding residues include G140, E155, N170, and N228. N228 lines the Mg(2+) pocket. The linker stretch occupies residues 231-251; that stretch reads VALSQAEIIMKNRINRKNMVN. The segment at 252 to 459 is N-acetyltransferase; sequence GVTIIDPSNT…VDQLLNKKKS (208 aa). R333 and K351 together coordinate UDP-N-acetyl-alpha-D-glucosamine. Catalysis depends on H363, which acts as the Proton acceptor. Residues Y366 and N377 each contribute to the UDP-N-acetyl-alpha-D-glucosamine site. Residues 386–387, A423, and R440 each bind acetyl-CoA; that span reads NY.

This sequence in the N-terminal section; belongs to the N-acetylglucosamine-1-phosphate uridyltransferase family. It in the C-terminal section; belongs to the transferase hexapeptide repeat family. As to quaternary structure, homotrimer. Mg(2+) serves as cofactor.

The protein resides in the cytoplasm. The enzyme catalyses alpha-D-glucosamine 1-phosphate + acetyl-CoA = N-acetyl-alpha-D-glucosamine 1-phosphate + CoA + H(+). It carries out the reaction N-acetyl-alpha-D-glucosamine 1-phosphate + UTP + H(+) = UDP-N-acetyl-alpha-D-glucosamine + diphosphate. The protein operates within nucleotide-sugar biosynthesis; UDP-N-acetyl-alpha-D-glucosamine biosynthesis; N-acetyl-alpha-D-glucosamine 1-phosphate from alpha-D-glucosamine 6-phosphate (route II): step 2/2. It functions in the pathway nucleotide-sugar biosynthesis; UDP-N-acetyl-alpha-D-glucosamine biosynthesis; UDP-N-acetyl-alpha-D-glucosamine from N-acetyl-alpha-D-glucosamine 1-phosphate: step 1/1. Its pathway is bacterial outer membrane biogenesis; LPS lipid A biosynthesis. In terms of biological role, catalyzes the last two sequential reactions in the de novo biosynthetic pathway for UDP-N-acetylglucosamine (UDP-GlcNAc). The C-terminal domain catalyzes the transfer of acetyl group from acetyl coenzyme A to glucosamine-1-phosphate (GlcN-1-P) to produce N-acetylglucosamine-1-phosphate (GlcNAc-1-P), which is converted into UDP-GlcNAc by the transfer of uridine 5-monophosphate (from uridine 5-triphosphate), a reaction catalyzed by the N-terminal domain. In Bacillus cereus (strain AH187), this protein is Bifunctional protein GlmU.